Here is a 91-residue protein sequence, read N- to C-terminus: UPF0358 protein SERP0701 (91 aa).

This sequence belongs to the UPF0358 family.

In Staphylococcus epidermidis (strain ATCC 35984 / DSM 28319 / BCRC 17069 / CCUG 31568 / BM 3577 / RP62A), this protein is UPF0358 protein SERP0701.